The chain runs to 81 residues: MGVNFNICLLLLLVATISSQPLKATEKDDSTDENPFGIYRRGSQCAVYGGRCIPTSVRCPPNTFQCDLSGCSWSERCCCHL.

Residues 1–19 form the signal peptide; sequence MGVNFNICLLLLLVATISS. Residues 20 to 39 constitute a propeptide that is removed on maturation; sequence QPLKATEKDDSTDENPFGIY.

The protein belongs to the Cnidaria small cysteine-rich protein (SCRiP) family. alpha subfamily. In terms of processing, the basic myotoxic domain of rattlesnake crotamine toxins (with 6 Cys residues) has been detected in this protein. However, this protein contains 2 additional Cys at the C-terminal region. Hence, this protein may contain 4 disulfide bonds instead of the 3 suggested by the myotoxin domain.

Its subcellular location is the secreted. The protein localises to the nematocyst. In terms of biological role, induces neurotoxic symptoms on zebrafish. Has also been claimed to be implied in calcification, but tests on homolog proteins suggest that proteins of this family have a neurotoxic function and not a calcification function. This chain is Small cysteine-rich protein 1 2, found in Montipora capitata (Rice coral).